Here is a 103-residue protein sequence, read N- to C-terminus: Small ribosomal subunit protein uS10 (103 aa).

It belongs to the universal ribosomal protein uS10 family. In terms of assembly, part of the 30S ribosomal subunit.

Functionally, involved in the binding of tRNA to the ribosomes. The protein is Small ribosomal subunit protein uS10 of Pelodictyon phaeoclathratiforme (strain DSM 5477 / BU-1).